The primary structure comprises 104 residues: Protein S100-A14 (104 aa).

In terms of domain architecture, EF-hand spans 27–61; it reads KNFHQYSVEGGKETLTPSELRDLVTQQLPHLMPSN.

This sequence belongs to the S-100 family. Homodimer. Interacts with AGER. Expressed at highest levels in colon and at moderate levels in thymus, kidney, liver, small intestine, and lung. Low expression in heart and no expression is seen in brain, skeletal muscle, spleen, placenta and peripheral blood leukocytes.

Its subcellular location is the cytoplasm. Modulates P53/TP53 protein levels, and thereby plays a role in the regulation of cell survival and apoptosis. Depending on the context, it can promote cell proliferation or apoptosis. Plays a role in the regulation of cell migration by modulating the levels of MMP2, a matrix protease that is under transcriptional control of P53/TP53. Does not bind calcium. The chain is Protein S100-A14 (S100A14) from Homo sapiens (Human).